A 476-amino-acid polypeptide reads, in one-letter code: Lactate utilization protein B (476 aa).

4Fe-4S ferredoxin-type domains are found at residues 304–334 (GTEFQPVLQCIRCAACVNVCPVYRHIGGHSY) and 353–382 (YDDYKELPYASSLCAACTEVCPVKIPLHEL). Residues Cys313, Cys316, Cys319, Cys323, Cys366, Cys369, and Cys373 each coordinate [4Fe-4S] cluster.

The protein belongs to the LutB/YkgF family.

In terms of biological role, is involved in L-lactate degradation and allows cells to grow with lactate as the sole carbon source. Has probably a role as an electron transporter during oxidation of L-lactate. The protein is Lactate utilization protein B of Geobacillus thermodenitrificans (strain NG80-2).